We begin with the raw amino-acid sequence, 298 residues long: Small ribosomal subunit protein uS2 (298 aa).

A disordered region spans residues 272-298; the sequence is EGGDWAASSAAPAGESWAEAQPTEAKW.

It belongs to the universal ribosomal protein uS2 family. In terms of assembly, component of the small ribosomal subunit. Mature ribosomes consist of a small (40S) and a large (60S) subunit. The 40S subunit contains about 33 different proteins and 1 molecule of RNA (18S). The 60S subunit contains about 49 different proteins and 3 molecules of RNA (25S, 5.8S and 5S). Interacts with rps21.

Its subcellular location is the cytoplasm. Its function is as follows. Required for the assembly and/or stability of the 40S ribosomal subunit. Required for the processing of the 20S rRNA-precursor to mature 18S rRNA in a late step of the maturation of 40S ribosomal subunits. The polypeptide is Small ribosomal subunit protein uS2 (rps0) (Aspergillus niger (strain ATCC MYA-4892 / CBS 513.88 / FGSC A1513)).